The primary structure comprises 216 residues: Probable nicotinate-nucleotide adenylyltransferase (216 aa).

It belongs to the NadD family.

It carries out the reaction nicotinate beta-D-ribonucleotide + ATP + H(+) = deamido-NAD(+) + diphosphate. It functions in the pathway cofactor biosynthesis; NAD(+) biosynthesis; deamido-NAD(+) from nicotinate D-ribonucleotide: step 1/1. In terms of biological role, catalyzes the reversible adenylation of nicotinate mononucleotide (NaMN) to nicotinic acid adenine dinucleotide (NaAD). The polypeptide is Probable nicotinate-nucleotide adenylyltransferase (Geobacter sulfurreducens (strain ATCC 51573 / DSM 12127 / PCA)).